Reading from the N-terminus, the 70-residue chain is ATP synthase subunit c (70 aa).

2 helical membrane passes run 4–24 (IAAG…NGLV) and 47–67 (FIGV…ALMV).

This sequence belongs to the ATPase C chain family. As to quaternary structure, F-type ATPases have 2 components, F(1) - the catalytic core - and F(0) - the membrane proton channel. F(1) has five subunits: alpha(3), beta(3), gamma(1), delta(1), epsilon(1). F(0) has three main subunits: a(1), b(2) and c(10-14). The alpha and beta chains form an alternating ring which encloses part of the gamma chain. F(1) is attached to F(0) by a central stalk formed by the gamma and epsilon chains, while a peripheral stalk is formed by the delta and b chains.

Its subcellular location is the cell membrane. Functionally, f(1)F(0) ATP synthase produces ATP from ADP in the presence of a proton or sodium gradient. F-type ATPases consist of two structural domains, F(1) containing the extramembraneous catalytic core and F(0) containing the membrane proton channel, linked together by a central stalk and a peripheral stalk. During catalysis, ATP synthesis in the catalytic domain of F(1) is coupled via a rotary mechanism of the central stalk subunits to proton translocation. Key component of the F(0) channel; it plays a direct role in translocation across the membrane. A homomeric c-ring of between 10-14 subunits forms the central stalk rotor element with the F(1) delta and epsilon subunits. The sequence is that of ATP synthase subunit c from Lactiplantibacillus plantarum (strain ATCC BAA-793 / NCIMB 8826 / WCFS1) (Lactobacillus plantarum).